The primary structure comprises 793 residues: Signal transducer and activator of transcription 5A (793 aa).

Residue Tyr90 is modified to Phosphotyrosine. A Phosphoserine modification is found at Ser128. The 98-residue stretch at 589 to 686 (WNDGAILGFV…EVFAKYYTPV (98 aa)) folds into the SH2 domain. Residues Tyr682 and Tyr694 each carry the phosphotyrosine modification. A Phosphoserine modification is found at Ser779.

The protein belongs to the transcription factor STAT family. Forms a homodimer or a heterodimer with a related family member. Interacts with NCOA1 and SOCS7. Binds NR3C1. Interacts with ERBB4. Interacts with EBF4. Interacts with CD69. ISGylated. In terms of processing, tyrosine phosphorylated in response to KITLG/SCF, IL2, IL3, IL7, IL15, CSF2/GMCSF, GH1, PRL, EPO and THPO. Activated KIT promotes phosphorylation on tyrosine residues and subsequent translocation to the nucleus. Tyrosine phosphorylated in response to constitutively activated FGFR1, FGFR2, FGFR3 and FGFR4. Tyrosine phosphorylation is required for DNA-binding activity and dimerization. Serine phosphorylation is also required for maximal transcriptional activity. Tyrosine phosphorylated in response to signaling via activated FLT3; wild-type FLT3 results in much weaker phosphorylation than constitutively activated mutant FLT3. Alternatively, can be phosphorylated by JAK2 at Tyr-694. As to expression, in the virgin, found in most tissues except brain and muscle. During lactation, abundantly found in mammary tissue, as well as in other secretory organs such as salivary gland and seminal vesicle.

The protein localises to the cytoplasm. It is found in the nucleus. Functionally, carries out a dual function: signal transduction and activation of transcription. Mediates cellular responses to the cytokine KITLG/SCF and other growth factors. May mediate cellular responses to activated FGFR1, FGFR2, FGFR3 and FGFR4. Binds to the GAS element and activates PRL-induced transcription. Regulates the expression of milk proteins during lactation. In Mus musculus (Mouse), this protein is Signal transducer and activator of transcription 5A (Stat5a).